We begin with the raw amino-acid sequence, 325 residues long: Helicase VP6-A (325 aa).

Disordered regions lie at residues 1-122 and 185-230; these read MLLA…GATG and DLRR…EPAR. 4 stretches are compositionally biased toward basic and acidic residues: residues 8–18, 32–54, 61–79, and 92–105; these read VIKRSSEELKQ, EGGK…KDGE, GQKE…DRRI, and LGER…RGDG. ATP is bound at residue K106. A compositionally biased stretch (gly residues) spans 106–122; it reads KVGGGGGDADAGVGATG. Basic and acidic residues-rich tracts occupy residues 185-203 and 211-229; these read DLRR…ERGG and HGDA…EEPA.

Belongs to the orbivirus VP6 family. As to quaternary structure, homohexamer.

It is found in the virion. It carries out the reaction ATP + H2O = ADP + phosphate + H(+). In terms of biological role, ATP dependent RNA helicase essential for RNA packaging and viral transcription. Possesses ss- and dsRNA-binding capacity. This is Helicase VP6-A (Segment-9) from Bluetongue virus 17 (isolate USA) (BTV 17).